A 750-amino-acid chain; its full sequence is Polyribonucleotide nucleotidyltransferase (750 aa).

The Mg(2+) site is built by Asp489 and Asp495. The 65-residue stretch at 556–620 (PKMITRRIPN…EGIDKVIAKI (65 aa)) folds into the KH domain. Residues 630 to 701 (GSVYEVKVIK…KTRKDKVSRK (72 aa)) enclose the S1 motif domain. Residues 697–750 (KVSRKALMEKPEGYKERAPRDRDDKRGSRDNNRGRDNRGRDNRRDDRKPRENKD) form a disordered region. Over residues 702 to 750 (ALMEKPEGYKERAPRDRDDKRGSRDNNRGRDNRGRDNRRDDRKPRENKD) the composition is skewed to basic and acidic residues.

Belongs to the polyribonucleotide nucleotidyltransferase family. Mg(2+) serves as cofactor.

The protein resides in the cytoplasm. The enzyme catalyses RNA(n+1) + phosphate = RNA(n) + a ribonucleoside 5'-diphosphate. Functionally, involved in mRNA degradation. Catalyzes the phosphorolysis of single-stranded polyribonucleotides processively in the 3'- to 5'-direction. In Christiangramia forsetii (strain DSM 17595 / CGMCC 1.15422 / KT0803) (Gramella forsetii), this protein is Polyribonucleotide nucleotidyltransferase.